Reading from the N-terminus, the 368-residue chain is Proline-rich protein 5-like (368 aa).

Position 28 is a phosphoserine (Ser-28). The interval Pro-327 to Ser-368 is disordered. Polar residues-rich tracts occupy residues Gln-335–Asp-344 and Gln-357–Ser-368.

It belongs to the PROTOR family. Interacts with the mammalian target of rapamycin complex 2 (mTORC2) which contains MTOR, MLST8, PRR5, RICTOR, MAPKAP1 and DEPTOR. Interacts with RFFL. Interacts (via C-terminus) with ZFP36 (via C-terminus); this interaction may accelerate ZFP36-mediated mRNA decay during stress. Interacts with RICTOR. Post-translationally, ubiquitinated. Ubiquitination by RFFL promotes proteasomal degradation of PRR5L thereby modifying the substrate-specific activity of the mTORC2 complex. Ubiquitination by RFFL is stimulated by LPA/lysophosphatidic acid.

Associates with the mTORC2 complex that regulates cellular processes including survival and organization of the cytoskeleton. Regulates the activity of the mTORC2 complex in a substrate-specific manner preventing for instance the specific phosphorylation of PKCs and thereby controlling cell migration. Plays a role in the stimulation of ZFP36-mediated mRNA decay of several ZFP36-associated mRNAs, such as TNF-alpha and GM-CSF, in response to stress. Required for ZFP36 localization to cytoplasmic stress granule (SG) and P-body (PB) in response to stress. The sequence is that of Proline-rich protein 5-like (PRR5L) from Homo sapiens (Human).